Reading from the N-terminus, the 340-residue chain is Probable D,D-dipeptide transport system permease protein DdpB (340 aa).

The Periplasmic portion of the chain corresponds to 1 to 11 (MTFWSILRQRC). Residues 12–32 (WGLVLVVAGVCVITFIISHLI) form a helical membrane-spanning segment. Over 33–104 (PGDPARLLAG…IFFPATLELA (72 aa)) the chain is Cytoplasmic. The region spanning 97 to 327 (FPATLELAFG…LVNLVVDLLY (231 aa)) is the ABC transmembrane type-1 domain. The helical transmembrane segment at 105–125 (FGALLLALLIGIPLGILSAVW) threads the bilayer. At 126 to 135 (RNRWLDHLVR) the chain is on the periplasmic side. Residues 136–156 (IMAITGISTPAFWLGLGVIVL) traverse the membrane as a helical segment. Topologically, residues 157–199 (FYGHLQILPGGGRLDDWLDPPTHVTGFYLLDALLEGNGEVFFN) are cytoplasmic. A helical transmembrane segment spans residues 200 to 220 (ALQHLILPALTLAFVHLGIVA). At 221–246 (RQIRSAMLEQLSEDYIRTARASGLPG) the chain is on the periplasmic side. Residues 247–269 (WYIVLCYALPNALIPSITVLGLA) traverse the membrane as a helical segment. The Cytoplasmic portion of the chain corresponds to 270 to 279 (LGDLLYGAVL). The helical transmembrane segment at 280–300 (TETVFAWPGMGAWVVTSIQAL) threads the bilayer. Position 301 (aspartate 301) is a topological domain, periplasmic. Residues 302-322 (FPAVMGFAVVVSFAYVLVNLV) form a helical membrane-spanning segment. Over 323-340 (VDLLYLWIDPRIGRGGGE) the chain is Cytoplasmic.

Belongs to the binding-protein-dependent transport system permease family. OppBC subfamily. The complex is composed of two ATP-binding proteins (DdpD and DdpF), two transmembrane proteins (DdpB and DdpC) and a solute-binding protein (DdpA).

The protein localises to the cell inner membrane. Its function is as follows. Part of the ABC transporter complex DdpABCDF, which is probably involved in D,D-dipeptide transport. Probably responsible for the translocation of the substrate across the membrane. The chain is Probable D,D-dipeptide transport system permease protein DdpB (ddpB) from Escherichia coli (strain K12).